Reading from the N-terminus, the 466-residue chain is NADPH:adrenodoxin oxidoreductase, mitochondrial (466 aa).

Residues alanine 40, glutamate 61, leucine 69, and leucine 105 each coordinate FAD. Residues 176–179 (QGNV), 220–221 (RR), and glutamate 232 contribute to the NADP(+) site. FAD-binding positions include tryptophan 379 and 386 to 388 (GVI). Glycine 386 lines the NADP(+) pocket.

This sequence belongs to the ferredoxin--NADP reductase type 1 family. FAD serves as cofactor. In terms of tissue distribution, expressed predominantly in prothoracic gland of the larval ring gland and nurse cells of the adult ovary. Low expression is all adult tissues examined.

It is found in the mitochondrion inner membrane. The catalysed reaction is 2 reduced [adrenodoxin] + NADP(+) + H(+) = 2 oxidized [adrenodoxin] + NADPH. It participates in steroid metabolism; cholesterol metabolism. Functionally, required for synthesis of steroid hormones, for olfactory sensory behavior and completion of the second larval molt (a steroid mediated developmental transition) and pupariation. The protein is NADPH:adrenodoxin oxidoreductase, mitochondrial (dare) of Drosophila melanogaster (Fruit fly).